The primary structure comprises 443 residues: Structure-specific endonuclease subunit SLX1 (443 aa).

The region spanning 13–93 is the GIY-YIG domain; that stretch reads RVYVCYCLRS…QKPHASRHLR (81 aa). Residues 121–140 form a disordered region; that stretch reads FPATRSSAPSSAASHDSGLN. The SLX1-type zinc finger occupies 361-419; the sequence is CGLCGGHINRHVPLSYTHCPHACDAVFHLTCLARYSLEQETRAHARTFCLPTSAWCPMC.

This sequence belongs to the SLX1 family. Forms a heterodimer with SLX4. The cofactor is a divalent metal cation.

The protein resides in the nucleus. Functionally, catalytic subunit of the SLX1-SLX4 structure-specific endonuclease that resolves DNA secondary structures generated during DNA repair and recombination. Has endonuclease activity towards branched DNA substrates, introducing single-strand cuts in duplex DNA close to junctions with ss-DNA. The chain is Structure-specific endonuclease subunit SLX1 from Malassezia globosa (strain ATCC MYA-4612 / CBS 7966) (Dandruff-associated fungus).